Reading from the N-terminus, the 476-residue chain is Dermokine (476 aa).

A signal peptide spans 1-21 (MKFQGPLACLLLALCLGSGEA). 4 stretches are compositionally biased toward gly residues: residues 153–169 (SQGG…GGLG), 193–202 (WGQGGNGGPP), 236–259 (GSGG…GSGS), and 268–298 (SSGG…GSRG). The disordered stretch occupies residues 153–351 (SQGGLGGQGQ…ESGIQNSETS (199 aa)). Residues 299–315 (DSGSESSWGSSTGSSSG) show a composition bias toward low complexity. Gly residues predominate over residues 316–326 (NHGGSGGGNGH).

It belongs to the dermokine family. Homooligomer. Seems to be able to homodimerize and homotrimerize. Post-translationally, O-glycosylated. As to expression, expressed in epidermis; in the spinous and granular layers and in placenta. Also found in the epithelia of the small intestine, macrophages of the lung and endothelial cells of the lung. Isoform 15 is expressed in epidermis and placenta. Isoform 1 is expressed in epidermis.

The protein resides in the secreted. In terms of biological role, may act as a soluble regulator of keratinocyte differentiation. The polypeptide is Dermokine (DMKN) (Homo sapiens (Human)).